Consider the following 174-residue polypeptide: Shikimate kinase 2 (174 aa).

12–17 lines the ATP pocket; it reads GCGKTT. Mg(2+) contacts are provided by Thr-16 and Asp-32. 3 residues coordinate substrate: Asp-34, Arg-58, and Gly-79. An LID domain region spans residues 112–126; that stretch reads EAFPEEGQRPTLTGK. Arg-120 provides a ligand contact to ATP. Substrate is bound at residue Arg-139. An ATP-binding site is contributed by Gln-155.

The protein belongs to the shikimate kinase family. AroL subfamily. As to quaternary structure, monomer. It depends on Mg(2+) as a cofactor.

Its subcellular location is the cytoplasm. It catalyses the reaction shikimate + ATP = 3-phosphoshikimate + ADP + H(+). Its pathway is metabolic intermediate biosynthesis; chorismate biosynthesis; chorismate from D-erythrose 4-phosphate and phosphoenolpyruvate: step 5/7. Functionally, catalyzes the specific phosphorylation of the 3-hydroxyl group of shikimic acid using ATP as a cosubstrate. This is Shikimate kinase 2 from Enterobacter sp. (strain 638).